The primary structure comprises 3970 residues: MAYIPSSSEPIAIIGSACRFPGHSTSPSRLWELLRNPYDLTKQVPEGRFNVDGFHHPDGEHHGTTNAPNGYWLEEDPRRFDSTFFNITPKEAEAIDPQGKVLLEAVYEGLESAGLTLEGCSGSQVGVYVGTMTADYDILTGKDELTFSQYCATGTSRAIISNRVSYFFHWNGPSMTIDTACSSSLVAMHQAVLGLRSGESTMACVAGANLMLSPEPFICESSLHMLSPDGKSKMWDQSADGYARGEGVGVVFLKTLSRALADGDHIECIVRETGVNSDGRTKGITMPSSLAQAALIQDTYRRSGLDALNPDHRCQYFEAHGTGTQAGDPTEAEAIYKAFFGEDEELQEDGSILVGSIKTIIGHTEGAAGVAGVLKAALALKHAQVPPNQHLKSMNPRVVPFTRRLHVPNTLIPWPSVRPGHPLRASVNSFGFGGTNSHAILESYVPAIHGGHLAASIEKPIEHPPGFPLVLSANSAEALKDKVEQYIELLESEPEIDLQDLAWTLATRRSELPYRVSFSPVAGRERLLQEMRERLQTTEGNSSLGVRSKTVNHERGRILGIFTGQGAQWPQMGQQLIQRSPRFKEVIQSLDAVLRSCPDPPAWSIAHELLAPPTSSRLSEAALSQPLCTAVQIALVDILHEAGVELAAAVGHSSGEIAAAYAAGILTAPDAILIAYYRGFHAGLAQGPEGCRGGMMAVGMGVNEALEFCEQPAFLHHLHIAASNSPASVTISGDLEPLKQAKALLDERGTFARLLKVDTAYHSHHMDRCAAPYLQSLQAANIAPLSLTRSCVWVSSVYGPSGAPTLRELSGRYWKDNMVQPVFFTEAVTRALTEEGPFDMALEIGPHPALQGPAVQTMQEVNGSALPYAGLLHRGRDDLASVISTMGLIWSLLGSSSIDFDALSVALGNERSDCRVVKDLPSYPWDHTHMYHRQPRMAKQYLNRPARPHELLGVRTSDDTESEWRWRNLLKPSTLPWLKDHRFQDQIIVPAAAYCVMAFEAARALTTKPVKLVEIQNLSIKRGITMSDDSQGVETIFMLRKEPTVPGEGVISASFILDFVPGDADAQGTNAVKGMVHLHLGEPSAETLPRRSLPPPSGLNRVDLDEFYGSIKDIGLGYTGPFRAMTSLQRRLDFATGTLPKPHPAETSTLPVAPSLLDACFQAAFAAYAAPGDGSLWTSFLPQEIQNIRFNLDLCPVNPGPAATVNVDAVITQFSSASPESPANFSGDICVFNANGNMEVQVEGLTVVALSSTGPANDCELFIETVYKPDPYTGIVEARTEGINEEYVALQRACMRIADHFLHPNRTAGKPQQTPEAMQTGLADSPFRGYLELLISCGRTAPSRLPTAITEILMHFNEQSALQSHIRASVSQISHRFPQLRVLEITLGELQKYVTDAVVAGLAAPFHSYSHLFETTEKDAPSLLSAQTSIQDSRFRLLAFDKTALLSEQFPDETFDLVILSDGNRKNATLTSQLDGVHQLLAPGGYVFCVHSTGIPLQDRLLNPQKHHQSLSLQTLLRATPRVQGDFDLISSWTSPLRTIALSIRQSMSADVRHLIMPLTATDVSYMSDTVLLIGGETGETAQLSYQLAAILRDKSLEVVTAPRLEDVVSTSMGTVKAVIVLSDLDKPVLSSVNSSEFTALKQILVPNMSVLWLTSGFRDDQPYHYGTVGLFRSIRTETPQLKLQILDVAHISGAETVIAECFLRLITYLDSESTPLWTSEPELVWDGQHLLIPRVLPIDDLNRRYNSTRRVVHNYQNASLQVVQVVARWNGDRYTHHAVEATPSKASAPADEHFVNLRVLYSSAWAIEIKKGFHAFVSVATDSASRHLLALSPTNSSLITIPATHVHALPATGLDLSALLNRIVATLLAQSLLRQASPGGLLVHEADSFFADTLQRLNDEVRLLCFSTTDLALDDNRFIRLHPLSTKDATKAAVPSSRISSVADFSLGLTPTALVGLKSSTCMLIKAMDSLVKTEASILDNGNALSTAQDALLVVRWVVETALEELGSTRKPHTTTRVSDVLDKGLQPLGAVLDWTENVHVPLRVNRFDPGSQMRGNKTYVMIGLTGELGQSLCQFMVSHGARHLVVASRNPDKSPAWKTDLEKQGATIQVLSVDVTNVDAVRQLRVDLETSMPPVGGIVNGAMVLSDGLFADMPVESLQKALAPKVLGSQNLHDVFSDVDLDFFVMFSSLTGVPGNQGQSNYTAANMFMAGLAAQRRKAGQAASVLDIGMVSGIGYINRTDGAKIYANLKRQGYMPISERDIHGMFIEAIHCGRPTSTTGAQLTTGLQRFGVEGEEPLYWHTDPRFSHHRVLRNAVHKSTVSSSVESLKSRISEVQSQTAIAAILTESFASHVEAMLHLDPGSLDKETAIINLGVDSLMAVEIRSWFLAEVEKDMPVLKVLGGSSVATLAEEVAKELFEDRSTSAPPPMDLDKNSFDLGSVHGSSTDPSSNSDSKSGFDGFSSDDSSDIANDDSDPTAQCDQIEPMSLSQARMWLPYLMLQDKTAYNCTTSYRLIGQLDIPRFERALRSLLQSHQAFRTLFYTDHETGEAMQAIVPTSSTFSLRKVGSANDSSDVKVEHDRVAQHVYELERGDSFIATLVTHRPDYHTVIFGYHHIILDGVSWQIFLQELDRFYADPQRRPSLGVDFLDFSTRQHHDLTSIPSLSKRQFWKMTFASGSLPESLPLFPFAKAPARMPLTQYRVTEYFVELDRSLAAKIRSASTTNQTTAFHFYLSVFSVMMYRMLGVTDLCIGMTDANRNDQAFLETIGLLLDMLPLRFRLDKTPSDESAFADHLRATRDIVYSALGNSGVPLETILQDIGAESSATELPLFQAVVNYRMGAIKHKSIGDLGLEYLSYEDAGHPFDFILTIDEDEGRAGLTLSMQDYLYDRAGANIFLDSYIHLLEFFATTPTERVATPPAFAPALERTAIELGTGPRLSDPWEEPTLVHRIDHMAAKYPSDVALGDERGSLSYKAMSDRVNAIATQLLAVGAQVSTRVAVFGTPSTDNICSLLAILRIGAIYVPCDVRSADERLRTILTESEATVVIVNRETSSRFAKFHPDTVQAVIQLATVPIQSSPVHNAATAAGLAFIMFTSGSTGTPKGIQLTHANFLTHVQAASAYMQLGREVVLQQSAASYDASLAQIFYALANGGRLVVADNLRDTVALASILEKEAVTFTLMAPSEYLLLMEYTGDILARCSEWKVAMCGGEAFPPRLKGDFGRLGHGELSVYNAYGPTEIAVASNIGEVAIPRKEAAGESNDGDESHVPIGSALPEYNVYLVNEDIEPVPLGCPGQIAVAGPAVSAGYLKNEPLTSDKFPLVGERFHPEKSTRVYLTGDLARMLSNGSMVYLGRIESDTQIKLRGIRVELGDIANAILKTSRGVIANAAVGVRNPGPDQFLVAYVVLSGEKGTKRPANVRQYLDQLLVDLPLPQAMKPAVAVDVGSSLPMTSSGKLDMRALNARPLPASGDEDGDEDTETETGADADADAGADTTLSDIHSKLREIWNRALGGHTSIPITPSSNFFAVGGSSLSLLKMQALVQREFDLRIALPELFRTSTFGAIAERILRGVSAGFTEEEVEDTVPSSSPVDIIDWKKETALSETLRSLASSSQSDTRSPPMRRRPLTVILTGATGFLGRAIARALQARDDVLHIHCIAVRNPHSSAALELERTCDKVILHAGDLALPFLGMMEEEARLVFEEADVIVHNGADVSFLKSYQTLRGPNLRATQTLVEMTAHRQVPFHFVSTAGVATTLSEGSSPVIDEISLANHPPPTSRTGDAVLIDGYVASKWASETFLEHVHAQLALPVRIYRPSSITGADAPALDVMHNVLNLSRRMRALPDLGTWTGYFDFIRVETVAEEIAAGVTASPTPTATTPTPSGVEFIHLSGEKLIPVAEARKHLERETGYAFRTLEMAEWCREAAGYGLPALVAGYLESLEGQALSFPRLRSRIAEWGGGGREVVAV.

Residues Ser8–Ser443 enclose the Ketosynthase family 3 (KS3) domain. Catalysis depends on for beta-ketoacyl synthase activity residues Cys181, His320, and His363. Positions Ile561–Arg876 are malonyl-CoA:ACP transacylase (MAT) domain. Residues His949 to Pro1083 are N-terminal hotdog fold. A dehydratase (DH) domain region spans residues His949–Thr1253. Positions His949 to Ala1256 constitute a PKS/mFAS DH domain. The active-site Proton acceptor; for dehydratase activity is the His981. Residues Gly1098–Ala1256 form a C-terminal hotdog fold region. Catalysis depends on Asp1158, which acts as the Proton donor; for dehydratase activity. A ketoreductase (KR) domain region spans residues Thr2060–Ser2234. The Carrier 1 domain occupies Ala2342–Leu2419. At Ser2379 the chain carries O-(pantetheine 4'-phosphoryl)serine. Residues Phe2420–Cys2482 form a disordered region. A compositionally biased stretch (low complexity) spans Gly2445–Asp2466. Over residues Asp2467–Asp2477 the composition is skewed to acidic residues. The tract at residues Pro2487 to Thr2919 is condensation (C) domain. The tract at residues Ser2974–Lys3381 is adenylation (A) domain. Positions Arg3466–Asp3495 are disordered. Acidic residues predominate over residues Gly3472–Ala3492. Residues Thr3496–Val3574 form the Carrier 2 domain. Ser3534 carries the O-(pantetheine 4'-phosphoryl)serine modification. A reductase (R) domain region spans residues Leu3633–Glu3866.

In the C-terminal section; belongs to the NRP synthetase family.

It participates in secondary metabolite biosynthesis. In terms of biological role, polyketide synthase-nonribosomal peptide synthetase hybrid; part of the him gene cluster that mediates the biosynthesis of himeic acid A, a ubiquitin-activating enzyme (E1) inhibitor. First, himA, together with the trans-enoyl reductase himH, catalyzes the formation of apolyketide chain, which is then condensed with leucine by the NRPS activity of himA. Dieckmann cyclization and release from himA gives a tetramic acid intermediate as the product of himA PKS-NRPS. HimG then catalyzes alpha-oxidation of the tetramic acid ring, with a subsequent rearrangement to yield apyrone intermediate. Two terminal methyl groups of polyketide and amide side chains are oxidized to carboxylic acids by himC cytochrome P450 monooxygenase to form himeic acid A. Himeic acid A is further converted to himeic acids B and C during culture growth. No gene responsible for pyrone to pyridone conversion was found in the him gene cluster and himeic acid A is non-enzymatically converted to himeic acid C by the incorporation of an ammonium nitrogen atom in a pH5 buffer, and to himeic acid B at a conversion ratio of 50% during incubation in MeOH for 5 days. The polypeptide is Polyketide synthase-nonribosomal peptide synthetase hybrid himA (Aspergillus japonicus).